A 528-amino-acid polypeptide reads, in one-letter code: MPVTMSQAFIDNFLGNSPKWFKIAILSFLIINPIVFYINPFVAGWLLVIEFIFTLAMALKCYPLQPGGLLAIQAVAIGMTSPSQVFHEIEANLEVLLLLVFMVAGIYFMKQLLLFGFTKMITKVRSKIVVSLMFCTASAFLSAFLDALTVIAVIIAVAVGFYSIYHKVASGKTFNDDHDHTSDGQKQLCEEELEAFRGFLRNLLMHAGVGTALGGVCTMVGEPQNLIIAAQANWQFAEFAIRMSPVTVPVFFAGIFTCFLVEKFKIFGYGLQLPEAVHKILSDYEAHEDARRTNHDKMKLVVQAFIGIWLIVGLALHLASVGLIGLSVIILATAFNGVTNEHALGKAFEEALPFTALLAVFFAVVAVIIDQQLFAPVIQWALSYEGNTQLVIFYIANGLLSMVSDNVFVGTVYINEVKAALLSGQITRDQFDLLAVAINTGTNLPSVATPNGQAAFLFLLTSAIAPLIRLSYGRMVWMALPYTIVLSIVGVLAIELGGLEQMTQYFYDNQIITHHSIKDVVESAVSSH.

A run of 11 helical transmembrane segments spans residues 29–49 (LIINPIVFYINPFVAGWLLVI), 52–72 (IFTLAMALKCYPLQPGGLLAI), 95–115 (VLLLLVFMVAGIYFMKQLLLF), 139–159 (AFLSAFLDALTVIAVIIAVAV), 203–223 (LLMHAGVGTALGGVCTMVGEP), 248–268 (VPVFFAGIFTCFLVEKFKIFG), 304–324 (AFIGIWLIVGLALHLASVGLI), 349–369 (EEALPFTALLAVFFAVVAVII), 390–410 (LVIFYIANGLLSMVSDNVFVG), 448–468 (ATPNGQAAFLFLLTSAIAPLI), and 476–496 (VWMALPYTIVLSIVGVLAIEL).

Belongs to the NhaB Na(+)/H(+) (TC 2.A.34) antiporter family.

The protein resides in the cell inner membrane. It carries out the reaction 2 Na(+)(in) + 3 H(+)(out) = 2 Na(+)(out) + 3 H(+)(in). In terms of biological role, na(+)/H(+) antiporter that extrudes sodium in exchange for external protons. The chain is Na(+)/H(+) antiporter NhaB from Shewanella woodyi (strain ATCC 51908 / MS32).